Reading from the N-terminus, the 219-residue chain is UPF0319 protein MS0844 (219 aa).

The first 21 residues, 1-21 (MKFRLTALAVAALLTSTASFA), serve as a signal peptide directing secretion.

Belongs to the UPF0319 family.

This Mannheimia succiniciproducens (strain KCTC 0769BP / MBEL55E) protein is UPF0319 protein MS0844.